The primary structure comprises 266 residues: Ribosomal RNA small subunit methyltransferase A (266 aa).

S-adenosyl-L-methionine is bound by residues Asn-11, Leu-13, Gly-37, Glu-57, Asp-85, and Asn-104.

This sequence belongs to the class I-like SAM-binding methyltransferase superfamily. rRNA adenine N(6)-methyltransferase family. RsmA subfamily.

Its subcellular location is the cytoplasm. It catalyses the reaction adenosine(1518)/adenosine(1519) in 16S rRNA + 4 S-adenosyl-L-methionine = N(6)-dimethyladenosine(1518)/N(6)-dimethyladenosine(1519) in 16S rRNA + 4 S-adenosyl-L-homocysteine + 4 H(+). Specifically dimethylates two adjacent adenosines (A1518 and A1519) in the loop of a conserved hairpin near the 3'-end of 16S rRNA in the 30S particle. May play a critical role in biogenesis of 30S subunits. The chain is Ribosomal RNA small subunit methyltransferase A from Campylobacter jejuni subsp. jejuni serotype O:2 (strain ATCC 700819 / NCTC 11168).